The chain runs to 236 residues: Leucyl/phenylalanyl-tRNA--protein transferase (236 aa).

This sequence belongs to the L/F-transferase family.

The protein resides in the cytoplasm. The enzyme catalyses N-terminal L-lysyl-[protein] + L-leucyl-tRNA(Leu) = N-terminal L-leucyl-L-lysyl-[protein] + tRNA(Leu) + H(+). It carries out the reaction N-terminal L-arginyl-[protein] + L-leucyl-tRNA(Leu) = N-terminal L-leucyl-L-arginyl-[protein] + tRNA(Leu) + H(+). It catalyses the reaction L-phenylalanyl-tRNA(Phe) + an N-terminal L-alpha-aminoacyl-[protein] = an N-terminal L-phenylalanyl-L-alpha-aminoacyl-[protein] + tRNA(Phe). In terms of biological role, functions in the N-end rule pathway of protein degradation where it conjugates Leu, Phe and, less efficiently, Met from aminoacyl-tRNAs to the N-termini of proteins containing an N-terminal arginine or lysine. The chain is Leucyl/phenylalanyl-tRNA--protein transferase from Shewanella sp. (strain MR-7).